The sequence spans 186 residues: UPF0301 protein Tgr7_2910 (186 aa).

This sequence belongs to the UPF0301 (AlgH) family.

This Thioalkalivibrio sulfidiphilus (strain HL-EbGR7) protein is UPF0301 protein Tgr7_2910.